A 153-amino-acid chain; its full sequence is 6,7-dimethyl-8-ribityllumazine synthase 1 (153 aa).

5-amino-6-(D-ribitylamino)uracil contacts are provided by residues F16, 50–52 (AYE), and 74–76 (CVI). 79 to 80 (ET) provides a ligand contact to (2S)-2-hydroxy-3-oxobutyl phosphate. H82 functions as the Proton donor in the catalytic mechanism. F107 serves as a coordination point for 5-amino-6-(D-ribitylamino)uracil. R121 lines the (2S)-2-hydroxy-3-oxobutyl phosphate pocket.

The protein belongs to the DMRL synthase family.

The enzyme catalyses (2S)-2-hydroxy-3-oxobutyl phosphate + 5-amino-6-(D-ribitylamino)uracil = 6,7-dimethyl-8-(1-D-ribityl)lumazine + phosphate + 2 H2O + H(+). The protein operates within cofactor biosynthesis; riboflavin biosynthesis; riboflavin from 2-hydroxy-3-oxobutyl phosphate and 5-amino-6-(D-ribitylamino)uracil: step 1/2. Its function is as follows. Catalyzes the formation of 6,7-dimethyl-8-ribityllumazine by condensation of 5-amino-6-(D-ribitylamino)uracil with 3,4-dihydroxy-2-butanone 4-phosphate. This is the penultimate step in the biosynthesis of riboflavin. This is 6,7-dimethyl-8-ribityllumazine synthase 1 from Caulobacter vibrioides (strain ATCC 19089 / CIP 103742 / CB 15) (Caulobacter crescentus).